The following is a 712-amino-acid chain: Ribosome-releasing factor 2, mitochondrial (712 aa).

The N-terminal 28 residues, 1–28 (MQYSLLSAQLRCSRFLLRQQAPFINRCY), are a transit peptide targeting the mitochondrion. Residues 30 to 309 (DDIRNIGILA…AVNAYLPTPN (280 aa)) form the tr-type G domain. GTP contacts are provided by residues 39-46 (AHIDAGKT), 103-107 (DTPGH), and 157-160 (NKMD).

It belongs to the TRAFAC class translation factor GTPase superfamily. Classic translation factor GTPase family. EF-G/EF-2 subfamily.

It is found in the mitochondrion. Its function is as follows. Mitochondrial GTPase that mediates the disassembly of ribosomes from messenger RNA at the termination of mitochondrial protein biosynthesis. Not involved in the GTP-dependent ribosomal translocation step during translation elongation. The sequence is that of Ribosome-releasing factor 2, mitochondrial from Drosophila virilis (Fruit fly).